Consider the following 459-residue polypeptide: N-chimaerin (459 aa).

An N-acetylalanine modification is found at Ala-2. Residues 49–135 (EFHGMISREA…IETKAAEYIA (87 aa)) form the SH2 domain. The residue at position 192 (Thr-192) is a Phosphothreonine. A Phorbol-ester/DAG-type zinc finger spans residues 205-255 (IHNFKVHTFRGPHWCEYCANFMWGLIAQGVKCADCGLNVHKQCSKMVPNDC). The region spanning 268–459 (CDLTTLVKAH…LLIKNEDILF (192 aa)) is the Rho-GAP domain. Thr-340 is subject to Phosphothreonine.

As to quaternary structure, interacts with EPHA4; effector of EPHA4 in axon guidance linking EPHA4 activation to RAC1 regulation. Phosphorylated. Phosphorylation is EPHA4 kinase activity-dependent. In neurons in brain regions that are involved in learning and memory processes.

Functionally, GTPase-activating protein for p21-rac and a phorbol ester receptor. Involved in the assembly of neuronal locomotor circuits as a direct effector of EPHA4 in axon guidance. In Homo sapiens (Human), this protein is N-chimaerin (CHN1).